Here is a 221-residue protein sequence, read N- to C-terminus: Flagellar L-ring protein 2 (221 aa).

The first 16 residues, 1 to 16 (MKRFLILTPMVLALCG), serve as a signal peptide directing secretion. Residue Cys-17 is the site of N-palmitoyl cysteine attachment. Residue Cys-17 is the site of S-diacylglycerol cysteine attachment.

The protein belongs to the FlgH family. The basal body constitutes a major portion of the flagellar organelle and consists of four rings (L,P,S, and M) mounted on a central rod.

The protein resides in the cell outer membrane. The protein localises to the bacterial flagellum basal body. Functionally, assembles around the rod to form the L-ring and probably protects the motor/basal body from shearing forces during rotation. This chain is Flagellar L-ring protein 2, found in Yersinia pseudotuberculosis serotype I (strain IP32953).